A 123-amino-acid chain; its full sequence is Small ribosomal subunit protein uS13 (123 aa).

The tract at residues 92 to 123 (RKGLPVRGQKTKTNARTRKGPKKLVGAKKKSK) is disordered.

The protein belongs to the universal ribosomal protein uS13 family. Part of the 30S ribosomal subunit. Forms a loose heterodimer with protein S19. Forms two bridges to the 50S subunit in the 70S ribosome.

Functionally, located at the top of the head of the 30S subunit, it contacts several helices of the 16S rRNA. In the 70S ribosome it contacts the 23S rRNA (bridge B1a) and protein L5 of the 50S subunit (bridge B1b), connecting the 2 subunits; these bridges are implicated in subunit movement. Contacts the tRNAs in the A and P-sites. The protein is Small ribosomal subunit protein uS13 of Clostridium kluyveri (strain NBRC 12016).